Here is a 95-residue protein sequence, read N- to C-terminus: Aspartyl/glutamyl-tRNA(Asn/Gln) amidotransferase subunit C (95 aa).

This sequence belongs to the GatC family. In terms of assembly, heterotrimer of A, B and C subunits.

The enzyme catalyses L-glutamyl-tRNA(Gln) + L-glutamine + ATP + H2O = L-glutaminyl-tRNA(Gln) + L-glutamate + ADP + phosphate + H(+). It carries out the reaction L-aspartyl-tRNA(Asn) + L-glutamine + ATP + H2O = L-asparaginyl-tRNA(Asn) + L-glutamate + ADP + phosphate + 2 H(+). In terms of biological role, allows the formation of correctly charged Asn-tRNA(Asn) or Gln-tRNA(Gln) through the transamidation of misacylated Asp-tRNA(Asn) or Glu-tRNA(Gln) in organisms which lack either or both of asparaginyl-tRNA or glutaminyl-tRNA synthetases. The reaction takes place in the presence of glutamine and ATP through an activated phospho-Asp-tRNA(Asn) or phospho-Glu-tRNA(Gln). The sequence is that of Aspartyl/glutamyl-tRNA(Asn/Gln) amidotransferase subunit C from Alcanivorax borkumensis (strain ATCC 700651 / DSM 11573 / NCIMB 13689 / SK2).